We begin with the raw amino-acid sequence, 176 residues long: Disulfide bond formation protein B (176 aa).

Residues 1 to 14 are Cytoplasmic-facing; sequence MMRSLNRCSKHRAA. The helical transmembrane segment at 15–31 threads the bilayer; sequence WLLLALTTFSLELVALY. Topologically, residues 32 to 49 are periplasmic; the sequence is FQHVMLLKPCVLCVYQRC. Cysteine 41 and cysteine 44 are oxidised to a cystine. The chain crosses the membrane as a helical span at residues 50-65; it reads ALYGVVAAGLVGAIAP. Over 66–71 the chain is Cytoplasmic; sequence ATPLRF. A helical transmembrane segment spans residues 72–89; sequence SGLAIWLYSAWEGLQLAM. At 90-144 the chain is on the periplasmic side; it reads KHTDIQLHPSPFVTCDFFVSFPAWLPLDKWLPSVFSASGDCAVRQWHFLSLEMPQ. The cysteines at positions 104 and 130 are disulfide-linked. The helical transmembrane segment at 145 to 163 threads the bilayer; the sequence is WMIVIFGAYLAVAVLILLA. Over 164 to 176 the chain is Cytoplasmic; that stretch reads QFFPPRKRDLFSR.

This sequence belongs to the DsbB family.

Its subcellular location is the cell inner membrane. Its function is as follows. Required for disulfide bond formation in some periplasmic proteins. Acts by oxidizing the DsbA protein. The protein is Disulfide bond formation protein B of Sodalis glossinidius (strain morsitans).